Here is a 308-residue protein sequence, read N- to C-terminus: ATP synthase gamma chain (308 aa).

It belongs to the ATPase gamma chain family. F-type ATPases have 2 components, CF(1) - the catalytic core - and CF(0) - the membrane proton channel. CF(1) has five subunits: alpha(3), beta(3), gamma(1), delta(1), epsilon(1). CF(0) has three main subunits: a, b and c.

Its subcellular location is the cell membrane. In terms of biological role, produces ATP from ADP in the presence of a proton gradient across the membrane. The gamma chain is believed to be important in regulating ATPase activity and the flow of protons through the CF(0) complex. This is ATP synthase gamma chain from Saccharopolyspora erythraea (strain ATCC 11635 / DSM 40517 / JCM 4748 / NBRC 13426 / NCIMB 8594 / NRRL 2338).